The sequence spans 586 residues: MNLLVTSSLGVLLHLVVLCQADDHSELLVNTKSGKVMGTRVPVLSSHISAFLGIPFAEPPVGNMRFRRPEPKKPWSGVWNASTYPNNCQQYVDEQFPGFSGSEMWNPNREMSEDCLYLNIWVPSPRPKSTTVMVWIYGGGFYSGSSTLDVYNGKYLAYTEEVVLVSLSYRVGAFGFLALHGSQEAPGNVGLLDQRMALQWVHDNIQFFGGDPKTVTIFGESAGGASVGMHILSPGSRDLFRRAILQSGSPNCPWASVSVAEGRRRAVELGRNLNCNLNSDEELIHCLREKKPQELIDVEWNVLPFDSIFRFSFVPVIDGEFFPTSLESMLNSGNFKKTQILLGVNKDEGSFFLLYGAPGFSKDSESKISREDFMSGVKLSVPHANDLGLDAVTLQYTDWMDDNNGIKNRDGLDDIVGDHNVICPLMHFVNKYTKFGNGTYLYFFNHRASNLVWPEWMGVIHGYEIEFVFGLPLVKELNYTAEEEALSRRIMHYWATFAKTGNPNEPHSQESKWPLFTTKEQKFIDLNTEPMKVHQRLRVQMCVFWNQFLPKLLNATACDGELSSSGTSSSKGIIFYVLFSILYLIF.

Residues 1–21 form the signal peptide; the sequence is MNLLVTSSLGVLLHLVVLCQA. Asparagine 80 carries N-linked (GlcNAc...) asparagine glycosylation. Residues cysteine 88 and cysteine 115 are joined by a disulfide bond. The active-site Acyl-ester intermediate is serine 221. Cysteine 275 and cysteine 286 are oxidised to a cystine. The active-site Charge relay system is glutamate 348. Cysteines 423 and 542 form a disulfide. Residue asparagine 437 is glycosylated (N-linked (GlcNAc...) asparagine). The active-site Charge relay system is histidine 461. Residues asparagine 478 and asparagine 554 are each glycosylated (N-linked (GlcNAc...) asparagine). The GPI-anchor amidated serine moiety is linked to residue serine 564. Positions 565 to 586 are cleaved as a propeptide — removed in mature form; that stretch reads SGTSSSKGIIFYVLFSILYLIF.

Belongs to the type-B carboxylesterase/lipase family. Isoform H form is a homodimer; the asymmetric form is a disulfide-bonded oligomer composed of a collagenic subunit (Q) and a variable number of T catalytic subunits. In terms of processing, an interchain disulfide bond is present in what becomes position 593 of the T isoform. Found in the synapses and to a lower extent in extrajunctional areas of muscle and nerve, and on erythrocyte membranes.

Its subcellular location is the cell membrane. The protein localises to the synapse. The catalysed reaction is acetylcholine + H2O = choline + acetate + H(+). With respect to regulation, inhibited by substrate concentrations above 0.5 mM. Its function is as follows. Terminates signal transduction at the neuromuscular junction by rapid hydrolysis of the acetylcholine released into the synaptic cleft. May be involved in cell-cell interactions. The polypeptide is Acetylcholinesterase (ache) (Tetronarce californica (Pacific electric ray)).